Reading from the N-terminus, the 1230-residue chain is DNA-directed RNA polymerase, mitochondrial (1230 aa).

Residues 1 to 41 constitute a mitochondrion transit peptide; sequence MSALCWGRGAAGLKRALRPCGRPGLPGKEGTAGGVCGPRRS. Disordered regions lie at residues 18–55, 95–115, and 731–750; these read RPCGRPGLPGKEGTAGGVCGPRRSSSASPQEQDQDRRK, GSGDGSLQPPRKVQMGAKDAT, and VPAPPSEAPQPPEAHLPHSA. Residues 732–744 are compositionally biased toward pro residues; that stretch reads PAPPSEAPQPPEA. The tract at residues 802 to 1230 is mediates interaction with TEFM; sequence FRGRTYPCPP…QVKRSTYFFS (429 aa). Catalysis depends on residues Asp922, Lys991, and Asp1151.

The protein belongs to the phage and mitochondrial RNA polymerase family. Homodimer. Component of the mitochondrial transcription initiation complex, composed at least of TFB2M, TFAM and POLRMT. In this complex TFAM recruits POLRMT to the promoter whereas TFB2M induces structural changes in POLRMT to enable promoter opening and trapping of the DNA non-template strand. Upon metabolic stress, forms a complex composed of FOXO3, SIRT3 and mitochondrial RNA polymerase POLRMT; the complex is recruited to mtDNA in a SIRT3-dependent manner. Also forms a complex composed of FOXO3, SIRT3, TFAM and POLRMT. Interacts with TFB1M and TFB2M, leading to the stimulation of transcription. Interacts with TEFM. Interacts with MTRES1.

The protein localises to the mitochondrion. The catalysed reaction is RNA(n) + a ribonucleoside 5'-triphosphate = RNA(n+1) + diphosphate. Its function is as follows. DNA-dependent RNA polymerase catalyzes the transcription of mitochondrial DNA into RNA using the four ribonucleoside triphosphates as substrates. Component of the mitochondrial transcription initiation complex, composed at least of TFB2M, TFAM and POLRMT that is required for basal transcription of mitochondrial DNA. In this complex, TFAM recruits POLRMT to a specific promoter whereas TFB2M induces structural changes in POLRMT to enable promoter opening and trapping of the DNA non-template strand. Has DNA primase activity. Catalyzes the synthesis of short RNA primers that are necessary for the initiation of lagging-strand DNA synthesis from the origin of light-strand DNA replication (OriL). The polypeptide is DNA-directed RNA polymerase, mitochondrial (Homo sapiens (Human)).